The chain runs to 321 residues: Biotin synthase (321 aa).

A Radical SAM core domain is found at 45-271 (FFGKKVKLNM…INPSKEIRIA (227 aa)). Residues Cys-63, Cys-67, and Cys-70 each coordinate [4Fe-4S] cluster. Cys-106, Cys-139, Cys-199, and Arg-269 together coordinate [2Fe-2S] cluster.

This sequence belongs to the radical SAM superfamily. Biotin synthase family. As to quaternary structure, homodimer. [4Fe-4S] cluster is required as a cofactor. The cofactor is [2Fe-2S] cluster.

The enzyme catalyses (4R,5S)-dethiobiotin + (sulfur carrier)-SH + 2 reduced [2Fe-2S]-[ferredoxin] + 2 S-adenosyl-L-methionine = (sulfur carrier)-H + biotin + 2 5'-deoxyadenosine + 2 L-methionine + 2 oxidized [2Fe-2S]-[ferredoxin]. Its pathway is cofactor biosynthesis; biotin biosynthesis; biotin from 7,8-diaminononanoate: step 2/2. Its function is as follows. Catalyzes the conversion of dethiobiotin (DTB) to biotin by the insertion of a sulfur atom into dethiobiotin via a radical-based mechanism. This Staphylococcus haemolyticus (strain JCSC1435) protein is Biotin synthase.